The chain runs to 570 residues: Sulfite reductase [NADPH] hemoprotein beta-component (570 aa).

Residues Cys434, Cys440, Cys479, and Cys483 each contribute to the [4Fe-4S] cluster site. Cys483 contacts siroheme.

This sequence belongs to the nitrite and sulfite reductase 4Fe-4S domain family. In terms of assembly, alpha(8)-beta(8). The alpha component is a flavoprotein, the beta component is a hemoprotein. Siroheme is required as a cofactor. The cofactor is [4Fe-4S] cluster.

It carries out the reaction hydrogen sulfide + 3 NADP(+) + 3 H2O = sulfite + 3 NADPH + 4 H(+). It participates in sulfur metabolism; hydrogen sulfide biosynthesis; hydrogen sulfide from sulfite (NADPH route): step 1/1. In terms of biological role, component of the sulfite reductase complex that catalyzes the 6-electron reduction of sulfite to sulfide. This is one of several activities required for the biosynthesis of L-cysteine from sulfate. The sequence is that of Sulfite reductase [NADPH] hemoprotein beta-component from Shigella sonnei (strain Ss046).